A 504-amino-acid chain; its full sequence is Glycerol kinase (504 aa).

Threonine 12 provides a ligand contact to ADP. Positions 12, 13, and 14 each coordinate ATP. Threonine 12 provides a ligand contact to sn-glycerol 3-phosphate. ADP is bound at residue arginine 16. Sn-glycerol 3-phosphate contacts are provided by arginine 82, glutamate 83, tyrosine 134, and aspartate 246. Glycerol contacts are provided by arginine 82, glutamate 83, tyrosine 134, aspartate 246, and glutamine 247. 2 residues coordinate ADP: threonine 268 and glycine 312. The ATP site is built by threonine 268, glycine 312, glutamine 316, and glycine 413. The ADP site is built by glycine 413 and asparagine 417.

This sequence belongs to the FGGY kinase family.

It catalyses the reaction glycerol + ATP = sn-glycerol 3-phosphate + ADP + H(+). It participates in polyol metabolism; glycerol degradation via glycerol kinase pathway; sn-glycerol 3-phosphate from glycerol: step 1/1. Its activity is regulated as follows. Inhibited by fructose 1,6-bisphosphate (FBP). Its function is as follows. Key enzyme in the regulation of glycerol uptake and metabolism. Catalyzes the phosphorylation of glycerol to yield sn-glycerol 3-phosphate. In Paenarthrobacter aurescens (strain TC1), this protein is Glycerol kinase.